A 421-amino-acid chain; its full sequence is Glycosaminoglycan xylosylkinase homolog (421 aa).

Residues 1–21 (MNKRSVIIAGIVASLLGLALG) form the signal peptide. Asn-83 carries N-linked (GlcNAc...) asparagine glycosylation. 2 residues coordinate ATP: Gln-131 and Lys-147. Residue Asp-166 participates in Mn(2+) binding. 2 disulfide bridges follow: Cys-225-Cys-240 and Cys-230-Cys-233. 252-255 (IYIV) is an ATP binding site. 2 cysteine pairs are disulfide-bonded: Cys-285–Cys-351 and Cys-352–Cys-409. Asp-314 is an active-site residue. ATP-binding residues include Glu-319 and Asp-329. Asp-329 contacts Mn(2+).

This sequence belongs to the FAM20 family. Requires Mn(2+) as cofactor.

Its subcellular location is the golgi apparatus. It is found in the endoplasmic reticulum. It carries out the reaction 3-O-(beta-D-galactosyl-(1-&gt;3)-beta-D-galactosyl-(1-&gt;4)-beta-D-xylosyl)-L-seryl-[protein] + ATP = 3-O-(beta-D-galactosyl-(1-&gt;3)-beta-D-galactosyl-(1-&gt;4)-beta-D-2-O-phosphoxylosyl)-L-seryl-[protein] + ADP + H(+). In terms of biological role, kylose kinase that mediates the 2-O-phosphorylation of xylose in the glycosaminoglycan-protein linkage region of proteoglycans. The protein is Glycosaminoglycan xylosylkinase homolog of Drosophila melanogaster (Fruit fly).